The following is a 259-amino-acid chain: Tryptophan synthase alpha chain (259 aa).

Catalysis depends on proton acceptor residues Glu35 and Asp46.

This sequence belongs to the TrpA family. In terms of assembly, tetramer of two alpha and two beta chains.

It carries out the reaction (1S,2R)-1-C-(indol-3-yl)glycerol 3-phosphate + L-serine = D-glyceraldehyde 3-phosphate + L-tryptophan + H2O. The protein operates within amino-acid biosynthesis; L-tryptophan biosynthesis; L-tryptophan from chorismate: step 5/5. Its function is as follows. The alpha subunit is responsible for the aldol cleavage of indoleglycerol phosphate to indole and glyceraldehyde 3-phosphate. This chain is Tryptophan synthase alpha chain, found in Methanococcus maripaludis (strain C7 / ATCC BAA-1331).